A 191-amino-acid polypeptide reads, in one-letter code: Protein Ves (191 aa).

It belongs to the Ves family.

The protein is Protein Ves of Shigella boydii serotype 18 (strain CDC 3083-94 / BS512).